The primary structure comprises 185 residues: Erythropoietin (185 aa).

Positions 1–22 are cleaved as a signal peptide; it reads MLQKRGRGLLVLLLMLLEWTRP. Disulfide bonds link Cys-32–Cys-180 and Cys-54–Cys-58.

It belongs to the EPO/TPO family.

It localises to the secreted. Erythropoietin is the principal hormone involved in the regulation of erythrocyte differentiation and the maintenance of a physiological level of circulating erythrocyte mass. The chain is Erythropoietin (epo) from Epinephelus coioides (Orange-spotted grouper).